The chain runs to 148 residues: Putative cyclin-dependent kinase inhibitor SPL2 (148 aa).

Ser59 and Ser86 each carry phosphoserine.

Its subcellular location is the cytoplasmic granule. The protein resides in the cytoplasm. Its function is as follows. Putative cyclin-dependent kinase (CDK) inhibitor necessary and sufficient for PHO pathway-dependent down-regulation of low-affinity phosphate transport. This Saccharomyces cerevisiae (strain ATCC 204508 / S288c) (Baker's yeast) protein is Putative cyclin-dependent kinase inhibitor SPL2 (SPL2).